The chain runs to 347 residues: Geranylgeranyl pyrophosphate synthase 7, chloroplastic (347 aa).

A chloroplast-targeting transit peptide spans 1-39 (MTTLNLSIFPSVKISSSASIPGFIKIQPFLLRRKLSTVL). Residues lysine 95, arginine 98, and histidine 127 each coordinate isopentenyl diphosphate. 2 residues coordinate Mg(2+): aspartate 134 and aspartate 140. Arginine 145 is a dimethylallyl diphosphate binding site. Arginine 146 is an isopentenyl diphosphate binding site. Dimethylallyl diphosphate-binding residues include lysine 232, threonine 233, glutamine 270, lysine 287, and lysine 297.

Belongs to the FPP/GGPP synthase family. As to quaternary structure, monomer. Requires Mg(2+) as cofactor.

Its subcellular location is the plastid. The protein localises to the chloroplast. It catalyses the reaction isopentenyl diphosphate + dimethylallyl diphosphate = (2E)-geranyl diphosphate + diphosphate. The catalysed reaction is isopentenyl diphosphate + (2E)-geranyl diphosphate = (2E,6E)-farnesyl diphosphate + diphosphate. The enzyme catalyses isopentenyl diphosphate + (2E,6E)-farnesyl diphosphate = (2E,6E,10E)-geranylgeranyl diphosphate + diphosphate. Its pathway is isoprenoid biosynthesis; farnesyl diphosphate biosynthesis; farnesyl diphosphate from geranyl diphosphate and isopentenyl diphosphate: step 1/1. It functions in the pathway isoprenoid biosynthesis; geranyl diphosphate biosynthesis; geranyl diphosphate from dimethylallyl diphosphate and isopentenyl diphosphate: step 1/1. The protein operates within isoprenoid biosynthesis; geranylgeranyl diphosphate biosynthesis; geranylgeranyl diphosphate from farnesyl diphosphate and isopentenyl diphosphate: step 1/1. Functionally, catalyzes the trans-addition of the three molecules of IPP onto DMAPP to form geranylgeranyl pyrophosphate. The polypeptide is Geranylgeranyl pyrophosphate synthase 7, chloroplastic (Arabidopsis thaliana (Mouse-ear cress)).